A 199-amino-acid chain; its full sequence is Phosphoserine phosphatase RsbX (199 aa).

The 188-residue stretch at 11-198 (QTLVYQLNKE…DDLTYILGQL (188 aa)) folds into the PPM-type phosphatase domain.

It carries out the reaction O-phospho-L-serine + H2O = L-serine + phosphate. The enzyme catalyses O-phospho-D-serine + H2O = D-serine + phosphate. Functionally, negative regulator of sigma-B activity. Dephosphorylates RsbS. Plays a role both in maintaining low sigma-B activity during growth and in reestablishing prestress sigma-B activity after induction. Could have a negative feedback role by indirectly communicating sigma-B protein levels. The protein is Phosphoserine phosphatase RsbX (rsbX) of Bacillus subtilis (strain 168).